The sequence spans 526 residues: Plant intracellular Ras-group-related LRR protein 5 (526 aa).

11 LRR repeats span residues L229–L252, I253–L275, L276–R297, L298–L321, S323–C344, S346–L367, S368–M390, A391–K414, L416–N437, L438–N463, and R465–K484. A GVYW; degenerate motif is present at residues G485–Y492.

The protein belongs to the SHOC2 family. Widely expressed but preferentially in roots.

Functionally, leucine-rich repeat protein that likely mediates protein interactions, possibly in the context of signal transduction. The polypeptide is Plant intracellular Ras-group-related LRR protein 5 (PIRL5) (Arabidopsis thaliana (Mouse-ear cress)).